Reading from the N-terminus, the 400-residue chain is Tryptophan--tRNA ligase, cytoplasmic (400 aa).

The 'HIGH' region motif lies at 95 to 104; that stretch reads PSSGSLHFGH. The 'KMSKS' region signature appears at 281-285; sequence KMSAS.

Belongs to the class-I aminoacyl-tRNA synthetase family.

Its subcellular location is the cytoplasm. It carries out the reaction tRNA(Trp) + L-tryptophan + ATP = L-tryptophyl-tRNA(Trp) + AMP + diphosphate + H(+). The polypeptide is Tryptophan--tRNA ligase, cytoplasmic (trpS) (Dictyostelium discoideum (Social amoeba)).